Consider the following 437-residue polypeptide: Doublesex- and mab-3-related transcription factor A2 (437 aa).

Positions 49–96 (CARCRNHGVVSALKGHKRYCRWKDCMCAKCTLIAERQRVMAAQVALRR) form a DNA-binding region, DM. Disordered regions lie at residues 163 to 254 (SVTP…ARQR) and 297 to 317 (DKSE…PSVS). Low complexity-rich tracts occupy residues 179-201 (SESV…SGSE) and 223-235 (SPSS…SESG). Residues 254-289 (RTPIDILTRVFPAQKRSVLELVLQGCGGDVVQAIEQ) enclose the DMA domain.

Belongs to the DMRT family.

Its subcellular location is the nucleus. In terms of biological role, may be involved in sexual development. This is Doublesex- and mab-3-related transcription factor A2 (dmrta2) from Xenopus tropicalis (Western clawed frog).